The sequence spans 307 residues: Nicotinamide/nicotinic acid mononucleotide adenylyltransferase 2 (307 aa).

The NAD(+) site is built by serine 16 and phenylalanine 17. Residue histidine 24 participates in ATP binding. Positions 92, 95, 200, 202, 212, 213, and 232 each coordinate NAD(+). 271–274 (TKSR) contacts ATP.

It belongs to the eukaryotic NMN adenylyltransferase family. Monomer. Requires Mg(2+) as cofactor.

The protein localises to the golgi apparatus membrane. The protein resides in the cytoplasmic vesicle membrane. It localises to the cytoplasm. It is found in the cell projection. Its subcellular location is the axon. The catalysed reaction is beta-nicotinamide D-ribonucleotide + ATP + H(+) = diphosphate + NAD(+). It catalyses the reaction nicotinate beta-D-ribonucleotide + ATP + H(+) = deamido-NAD(+) + diphosphate. It functions in the pathway cofactor biosynthesis; NAD(+) biosynthesis; NAD(+) from nicotinamide D-ribonucleotide: step 1/1. Its pathway is cofactor biosynthesis; NAD(+) biosynthesis; deamido-NAD(+) from nicotinate D-ribonucleotide: step 1/1. In terms of biological role, nicotinamide/nicotinate-nucleotide adenylyltransferase that acts as an axon maintenance factor. Axon survival factor required for the maintenance of healthy axons: acts by delaying Wallerian axon degeneration, an evolutionarily conserved process that drives the loss of damaged axons. Catalyzes the formation of NAD(+) from nicotinamide mononucleotide (NMN) and ATP. Can also use the deamidated form; nicotinic acid mononucleotide (NaMN) as substrate but with a lower efficiency. Also catalyzes the reverse reaction, i.e. the pyrophosphorolytic cleavage of NAD(+). For the pyrophosphorolytic activity prefers NAD(+), NADH and NaAD as substrates and degrades nicotinic acid adenine dinucleotide phosphate (NHD) less effectively. Also acts as an activator of ADP-ribosylation by supporting the catalytic activity of PARP16 and promoting mono-ADP-ribosylation of ribosomes by PARP16. May be involved in the maintenance of axonal integrity. The polypeptide is Nicotinamide/nicotinic acid mononucleotide adenylyltransferase 2 (nmnat2) (Xenopus tropicalis (Western clawed frog)).